Reading from the N-terminus, the 142-residue chain is SLTAKDKALVKAFFGKIAGKADAVGHEALVRMLVVYPQTKTYFAHWPDLSPSSEEVKKHGKTIMAAVKEAVGKIDDLVGGMAQLSDLHAFKMRVDPSNFKILSHNILVTCAVHFPDDFTPEVHVSFDKFLAALSSTAADKYR.

Serine 1 is modified (N-acetylserine). Residues 1-142 (SLTAKDKALV…LSSTAADKYR (142 aa)) enclose the Globin domain. Histidine 59 contributes to the O2 binding site. Histidine 88 contributes to the heme b binding site.

Belongs to the globin family. As to quaternary structure, heterotetramer of two alpha chains and two beta chains.

Its function is as follows. Involved in oxygen transport from gills to the various peripheral tissues. The chain is Hemoglobin cathodic subunit alpha from Hoplosternum littorale (Hassar).